The chain runs to 414 residues: STAGA complex 65 subunit gamma (414 aa).

The interval 87–108 is disordered; sequence NQQQTEGVKTEESEPLPSCPGS. S108 is subject to Phosphoserine. K271 participates in a covalent cross-link: Glycyl lysine isopeptide (Lys-Gly) (interchain with G-Cter in SUMO2). Phosphoserine is present on residues S323 and S334. The disordered stretch occupies residues 346 to 414; it reads PQESEEGNVS…QRCKKRMRKI (69 aa). Low complexity predominate over residues 386–395; the sequence is SSYGSHSTDS.

In terms of assembly, component of the STAGA transcription coactivator-HAT complex, at least composed of SUPT3H, SUPT7L, GCN5L2, TAF5L, TAF6L, TADA3L, TAD1L, TAF10, TAF12 and TAF9. In terms of processing, sumoylated. In terms of tissue distribution, expressed at high levels in adenocarcinomas and gliomas and low in esophageal cancers and malignant hematological disease. Also expressed at high level in the thymus, low in peripheral blood mononuclear cells, and lowest in the stomach, small intestine, and skeletal muscle.

The protein resides in the nucleus. The polypeptide is STAGA complex 65 subunit gamma (SUPT7L) (Homo sapiens (Human)).